The chain runs to 213 residues: Ion-translocating oxidoreductase complex subunit E (213 aa).

Helical transmembrane passes span 25 to 45 (TFGL…VENG), 46 to 66 (IGMA…VSAI), 77 to 97 (PVEI…MEAF), 100 to 120 (DLYT…IVIG), 135 to 155 (IIDA…IGGI), and 181 to 201 (AMFM…MTIV).

The protein belongs to the NqrDE/RnfAE family. The Rnf complex is probably composed of eight subunits, including RnfA, RnfB, RnfC, RnfD, RnfE and RnfG.

The protein resides in the cell membrane. In terms of biological role, part of a membrane-bound complex that couples electron transfer with translocation of ions across the membrane. Catalyzes Na(+) transport, most probably coupled to electron transfer from reduced ferredoxin to methanophenazine and heterodisulfide reductase. Involved in heterodisulfide reduction during methanogenesis from acetate. In Methanosarcina acetivorans (strain ATCC 35395 / DSM 2834 / JCM 12185 / C2A), this protein is Ion-translocating oxidoreductase complex subunit E.